A 462-amino-acid chain; its full sequence is Asparagine--tRNA ligase (462 aa).

The protein belongs to the class-II aminoacyl-tRNA synthetase family. As to quaternary structure, homodimer.

It is found in the cytoplasm. The catalysed reaction is tRNA(Asn) + L-asparagine + ATP = L-asparaginyl-tRNA(Asn) + AMP + diphosphate + H(+). The protein is Asparagine--tRNA ligase of Borreliella afzelii (strain PKo) (Borrelia afzelii).